The primary structure comprises 210 residues: Na(+)-translocating NADH-quinone reductase subunit D (210 aa).

The next 5 helical transmembrane spans lie at F42–I62, I72–A92, V103–M123, L131–F151, and N178–I198.

It belongs to the NqrDE/RnfAE family. As to quaternary structure, composed of six subunits; NqrA, NqrB, NqrC, NqrD, NqrE and NqrF.

The protein localises to the cell inner membrane. The catalysed reaction is a ubiquinone + n Na(+)(in) + NADH + H(+) = a ubiquinol + n Na(+)(out) + NAD(+). Functionally, NQR complex catalyzes the reduction of ubiquinone-1 to ubiquinol by two successive reactions, coupled with the transport of Na(+) ions from the cytoplasm to the periplasm. NqrA to NqrE are probably involved in the second step, the conversion of ubisemiquinone to ubiquinol. In Vibrio campbellii (strain ATCC BAA-1116), this protein is Na(+)-translocating NADH-quinone reductase subunit D.